A 1400-amino-acid polypeptide reads, in one-letter code: DNA-directed RNA polymerase subunit beta' (1400 aa).

Residues C71, C73, C86, and C89 each coordinate Zn(2+). Residues D462, D464, and D466 each coordinate Mg(2+). The Zn(2+) site is built by C811, C885, C892, and C895.

Belongs to the RNA polymerase beta' chain family. In terms of assembly, the RNAP catalytic core consists of 2 alpha, 1 beta, 1 beta' and 1 omega subunit. When a sigma factor is associated with the core the holoenzyme is formed, which can initiate transcription. The cofactor is Mg(2+). It depends on Zn(2+) as a cofactor.

The catalysed reaction is RNA(n) + a ribonucleoside 5'-triphosphate = RNA(n+1) + diphosphate. Functionally, DNA-dependent RNA polymerase catalyzes the transcription of DNA into RNA using the four ribonucleoside triphosphates as substrates. This chain is DNA-directed RNA polymerase subunit beta', found in Brucella melitensis biotype 1 (strain ATCC 23456 / CCUG 17765 / NCTC 10094 / 16M).